The chain runs to 2019 residues: Sodium channel protein type 5 subunit alpha (2019 aa).

Over 1 to 129 (MANFLLPRGT…VRRAAVKILV (129 aa)) the chain is Cytoplasmic. Residues 27–66 (RMAEKQARGSATSQESREGLPEEEAPRPQLDLQASKKLPD) form a disordered region. Phosphoserine is present on Ser36. At Thr38 the chain carries Phosphothreonine. Residues 41–52 (ESREGLPEEEAP) are compositionally biased toward basic and acidic residues. Residues 113 to 420 (VLSPFHPVRR…VVAMAYEEQN (308 aa)) form an I repeat. Residues 130–149 (HSLFSMLIMCTILTNCVFMA) form a helical membrane-spanning segment. Over 150-157 (QHDPPPWT) the chain is Extracellular. A helical membrane pass occupies residues 158 to 179 (KYVEYTFTAIYTFESLVKILAR). Over 180–188 (GFCLHAFTF) the chain is Cytoplasmic. Residues 189–209 (LRDPWNWLDFSVIVMAYTTEF) form a helical membrane-spanning segment. Topologically, residues 210–216 (VDLGNVS) are extracellular. Asn214 carries an N-linked (GlcNAc...) asparagine glycan. The chain crosses the membrane as a helical span at residues 217–236 (ALRTFRVLRALKTISVISGL). Residues 237–249 (KTIVGALIQSVKK) are Cytoplasmic-facing. Residues 250 to 272 (LADVMVLTVFCLSVFALIGLQLF) form a helical membrane-spanning segment. The Extracellular segment spans residues 273–357 (MGNLRHKCVR…PDHGYTSFDS (85 aa)). Residues Cys280 and Cys335 are joined by a disulfide bond. N-linked (GlcNAc...) asparagine glycans are attached at residues Asn283, Asn288, Asn291, Asn318, and Asn328. Positions 358–378 (FAWAFLALFRLMTQDCWERLY) form an intramembrane region, pore-forming. The Extracellular portion of the chain corresponds to 379–386 (QQTLRSAG). The helical transmembrane segment at 387–413 (KIYMIFFMLVIFLGSFYLVNLILAVVA) threads the bilayer. Residues 414-719 (MAYEEQNQAT…VKFVVMDPFA (306 aa)) lie on the Cytoplasmic side of the membrane. Phosphoserine is present on residues Ser457, Ser460, Ser483, and Ser484. Disordered stretches follow at residues 461–575 (LEMS…TQGQ) and 610–647 (EATS…TPQA). Thr486 is modified (phosphothreonine). Residues 491-503 (DDRLPKSDSEDGP) are compositionally biased toward basic and acidic residues. Residues Ser497 and Ser510 each carry the phosphoserine modification. Residues 507–528 (NQLSLTHGLSRTSMRPRSSRGS) are compositionally biased toward polar residues. Arg526 carries the post-translational modification Dimethylated arginine; alternate. Arg526 is modified (omega-N-methylarginine; alternate). 2 positions are modified to phosphoserine: Ser539 and Ser571. A phosphoserine mark is found at Ser664 and Ser667. The II repeat unit spans residues 699–971 (CCPLWMSIKQ…QLALARIQRG (273 aa)). The chain crosses the membrane as a helical span at residues 720-737 (DLTITMCIVLNTLFMALE). Residues 738–746 (HYNMTAEFE) are Extracellular-facing. Asn740 carries an N-linked (GlcNAc...) asparagine glycan. The chain crosses the membrane as a helical span at residues 747–769 (EMLQVGNLVFTGIFTAEMTFKII). Residues 770–775 (ALDPYY) lie on the Cytoplasmic side of the membrane. A helical transmembrane segment spans residues 776–796 (YFQQGWNIFDSIIVILSLMEL). The Extracellular portion of the chain corresponds to 797–806 (GLSRMGNLSV). Asn803 carries N-linked (GlcNAc...) asparagine glycosylation. The chain crosses the membrane as a helical span at residues 807-821 (LRSFRLLRVFKLAKS). The Cytoplasmic portion of the chain corresponds to 822 to 838 (WPTLNTLIKIIGNSVGA). The chain crosses the membrane as a helical span at residues 839 to 860 (LGNLTLVLAIIVFIFAVVGMQL). Residues 861–886 (FGKNYSELRHRISDSGLLPRWHMMDF) lie on the Extracellular side of the membrane. Asn864 carries an N-linked (GlcNAc...) asparagine glycan. The segment at residues 887–905 (FHAFLIIFRILCGEWIETM) is an intramembrane region (pore-forming). The Extracellular segment spans residues 906 to 914 (WDCMEVSGQ). Residues Cys908 and Cys917 are joined by a disulfide bond. The chain crosses the membrane as a helical span at residues 915-943 (SLCLLVFLLVMVIGNLVVLNLFLALLLSS). Residues 944 to 1205 (FSADNLTAPD…LRKTCYRIVE (262 aa)) are Cytoplasmic-facing. The disordered stretch occupies residues 1000–1144 (HSQLPSCIAA…EDSYSEGSTA (145 aa)). Positions 1017 to 1036 (EVEKAPPARKETRFEEDKRP) are enriched in basic and acidic residues. Acidic residues predominate over residues 1056–1075 (SDTDDQEEDEENSLGTEEEE). Over residues 1098-1115 (SQVSETTSSEAEASTSQA) the composition is skewed to low complexity. An III repeat occupies 1189–1503 (PGKVWWRLRK…KKYYNAMKKL (315 aa)). A helical transmembrane segment spans residues 1206-1227 (HSWFETFIIFMILLSSGALAFE). At 1228 to 1238 (DIYLEERKTIK) the chain is on the extracellular side. The helical transmembrane segment at 1239 to 1261 (VLLEYADKMFTYVFVLEMLLKWV) threads the bilayer. At 1262-1270 (AYGFKKYFT) the chain is on the cytoplasmic side. The helical transmembrane segment at 1271–1293 (NAWCWLDFLIVDVSLVSLVANTL) threads the bilayer. Over 1294–1299 (GFAEMG) the chain is Extracellular. A helical membrane pass occupies residues 1300–1319 (PIKSLRTLRALRPLRALSRF). Residues 1320-1332 (EGMRVVVNALVGA) are Cytoplasmic-facing. A helical transmembrane segment spans residues 1333–1357 (IPSIMNVLLVCLIFWLIFSIMGVNL). Residues 1358-1402 (FAGKFGRCINQTEGDLPLNYTIVNNKSECESFNVTGELYWTKVKV) lie on the Extracellular side of the membrane. N-linked (GlcNAc...) asparagine glycosylation is found at Asn1367, Asn1376, Asn1382, and Asn1390. Positions 1403–1424 (NFDNVGAGYLALLQVATFKGWM) form an intramembrane region, pore-forming. Residues 1425–1447 (DIMYAAVDSRGYEEQPQWEDNLY) lie on the Extracellular side of the membrane. Residues 1448 to 1472 (MYIYFVVFIIFGSFFTLNLFIGVII) form a helical membrane-spanning segment. Topologically, residues 1473–1530 (DNFNQQKKKLGGQDIFMTEEQKKYYNAMKKLGSKKPQKPIPRPLNKYQGFIFDIVTKQ) are cytoplasmic. Ser1505 carries the phosphoserine; by PKC modification. The stretch at 1512-1809 (IPRPLNKYQG…WEKFDPEATQ (298 aa)) is one IV repeat. A helical membrane pass occupies residues 1531–1549 (AFDVTIMFLICLNMVTMMV). Topologically, residues 1550–1560 (ETDDQSPEKVN) are extracellular. A helical membrane pass occupies residues 1561 to 1582 (ILAKINLLFVAIFTGECIVKMA). Residues 1583–1591 (ALRHYYFTN) are Cytoplasmic-facing. Residues 1592 to 1614 (SWNIFDFVVVILSIVGTVLSDII) form a helical membrane-spanning segment. Residues 1615–1621 (QKYFFSP) lie on the Extracellular side of the membrane. The chain crosses the membrane as a helical span at residues 1622 to 1642 (TLFRVIRLARIGRILRLIRGA). Residues 1643 to 1652 (KGIRTLLFAL) are Cytoplasmic-facing. Residues 1653-1681 (MMSLPALFNIGLLLFLVMFIYSIFGMANF) traverse the membrane as a helical segment. Topologically, residues 1682–1699 (AYVKWEAGIDDMFNFQTF) are extracellular. The pore-forming intramembrane region spans 1700-1716 (ANSMLCLFQITTSAGWD). Residues 1717–1747 (GLLSPILNTGPPYCDPNLPNSNGSRGNCGSP) are Extracellular-facing. A helical membrane pass occupies residues 1748-1773 (AVGILFFTTYIIISFLIVVNMYIAII). At 1774-2019 (LENFSVATEE…SPDRDRESIV (246 aa)) the chain is on the cytoplasmic side. The segment at 1841–1903 (DLPMVSGDRI…ITTTLRRKHE (63 aa)) is interaction with FGF13. The IQ domain occupies 1903-1932 (EEVSATVIQRAFRRHLLQRSVKHASFLFRQ). The segment covering 1963–1982 (SGPLSSSSISSTSFPPSYDS) has biased composition (low complexity). The segment at 1963–2019 (SGPLSSSSISSTSFPPSYDSVTRATSDNLPVRASDYSRSEDLADFPPSPDRDRESIV) is disordered. The segment at 1977 to 1980 (PPSY) is interaction with NEDD4, NEDD4L and WWP2.

Belongs to the sodium channel (TC 1.A.1.10) family. Nav1.5/SCN5A subfamily. As to quaternary structure, cannot form the same regulatory interactions with beta subunits as other Navs do. Interacts with the PDZ domain of the syntrophin SNTA1, SNTB1 and SNTB2. Interacts with NEDD4, NEDD4L, WWP2 and GPD1L. Interacts with CALM. Interacts with FGF13; the interaction is direct and may regulate SNC5A density at membranes and function. Interacts with FGF12 and FGF14. Interacts with ANK3. Interacts with PKP2 (via N-terminus). Interacts with TMEM233. Interacts with XIRP2; the interaction is required for normal action potential configuration in the heart. Post-translationally, phosphorylation at Ser-1505 by PKC in a highly conserved cytoplasmic loop slows inactivation of the sodium channel and reduces peak sodium currents. Regulated through phosphorylation by CaMK2D. Ubiquitinated by NEDD4L; which promotes its endocytosis. Does not seem to be ubiquitinated by NEDD4 or WWP2. In terms of processing, lacks the cysteine which covalently binds the conotoxin GVIIJ. This cysteine (position 868) is speculated in other sodium channel subunits alpha to be implied in covalent binding with the sodium channel subunit beta-2 or beta-4. Post-translationally, N-glycosylated at Asn-318, probably hinders potential interaction with regulatory subunits. Expressed in the myocardium (at protein level).

The protein resides in the cell membrane. It localises to the cytoplasm. Its subcellular location is the perinuclear region. The protein localises to the sarcolemma. It is found in the T-tubule. The protein resides in the cell junction. It catalyses the reaction Na(+)(in) = Na(+)(out). With respect to regulation, channel inactivation is regulated by intracellular calcium levels. It is a tetrodotoxin-resistant voltage-gated Na(+) channel (Nav). Its function is as follows. Pore-forming subunit of Nav1.5, a voltage-gated sodium (Nav) channel that directly mediates the depolarizing phase of action potentials in excitable membranes. Navs, also called VGSCs (voltage-gated sodium channels) or VDSCs (voltage-dependent sodium channels), operate by switching between closed and open conformations depending on the voltage difference across the membrane. In the open conformation they allow Na(+) ions to selectively pass through the pore, along their electrochemical gradient. The influx of Na(+) ions provokes membrane depolarization, initiating the propagation of electrical signals throughout cells and tissues. Nav1.5 is the predominant sodium channel expressed in myocardial cells and it is responsible for the initial upstroke of the action potential in cardiac myocytes, thereby initiating the heartbeat. Required for normal electrical conduction including formation of the infranodal ventricular conduction system and normal action potential configuration, as a result of its interaction with XIRP2. The protein is Sodium channel protein type 5 subunit alpha of Mus musculus (Mouse).